Consider the following 884-residue polypeptide: Bifunctional heparan sulfate N-deacetylase/N-sulfotransferase 2 (884 aa).

The Cytoplasmic segment spans residues 1–18; sequence MLKLWKVVRPARQLELHR. The helical; Signal-anchor for type II membrane protein transmembrane segment at 19–39 threads the bilayer; sequence LILLLIAFSLGSMGFLAYYVS. At 40-884 the chain is on the lumenal side; the sequence is TSPKAKEPLP…REELQHSSSG (845 aa). A heparan sulfate N-deacetylase 2 region spans residues 41-598; the sequence is SPKAKEPLPL…KRHKDIWSKE (558 aa). A disordered region spans residues 49–82; the sequence is PLPLGDCSSSGAAGGPGPVRPPVPPRPPRPPETA. Over residues 66–79 the composition is skewed to pro residues; it reads PVRPPVPPRPPRPP. Residues Asn351 and Asn401 are each glycosylated (N-linked (GlcNAc...) asparagine). The interval 599 to 884 is heparan sulfate N-sulfotransferase 2; it reads KTCDRLPKFL…REELQHSSSG (286 aa). The active-site For sulfotransferase activity is Lys614. 614-618 is a 3'-phosphoadenylyl sulfate binding site; sequence KTGTT. The N-linked (GlcNAc...) asparagine glycan is linked to Asn667. Residue Ser712 participates in 3'-phosphoadenylyl sulfate binding. Asn727 and Asn803 each carry an N-linked (GlcNAc...) asparagine glycan. Cysteines 818 and 828 form a disulfide. 833 to 837 is a binding site for 3'-phosphoadenylyl sulfate; sequence KGRKY.

This sequence belongs to the sulfotransferase 1 family. NDST subfamily. As to quaternary structure, monomer.

The protein resides in the golgi apparatus membrane. It catalyses the reaction alpha-D-glucosaminyl-[heparan sulfate](n) + 3'-phosphoadenylyl sulfate = N-sulfo-alpha-D-glucosaminyl-[heparan sulfate](n) + adenosine 3',5'-bisphosphate + 2 H(+). Its pathway is glycan metabolism; heparan sulfate biosynthesis. It participates in glycan metabolism; heparin biosynthesis. Its function is as follows. Essential bifunctional enzyme that catalyzes both the N-deacetylation and the N-sulfation of glucosamine (GlcNAc) of the glycosaminoglycan in heparan sulfate. Modifies the GlcNAc-GlcA disaccharide repeating sugar backbone to make N-sulfated heparosan, a prerequisite substrate for later modifications in heparin biosynthesis. Plays a role in determining the extent and pattern of sulfation of heparan sulfate. Required for the exosomal release of SDCBP, CD63 and syndecan. In Bos taurus (Bovine), this protein is Bifunctional heparan sulfate N-deacetylase/N-sulfotransferase 2 (NDST2).